A 512-amino-acid chain; its full sequence is MEELKKYLERDRYWQQHFLYPLLFQEYIYALAHIHNRGLNGSIFYESGEILGYDNKSSFILVKRLILRMYQQNFEIHSSNESHKNRFVGHNNPFFSKMIWGGFAVIVEIPFSLPSLIEEKKKEIPKSQNLRSIHSXFPFLXDQFSHLNYVSDIRIPYPIHLEILIQIIQSWIQDVPSLHLLRFFLYEYHNWNCFITLKKSLSIFAKGNPRLFWFLYNSYVSEYESVFCFLRKQSSYLLSTSYRNLIERTHFYGKMEHLAVVCCNCFHKTLQLFKDPCIHYVRYQGKSILASKGTYLLMKKWKCYLVNFWECHFSFWSQPYRIHINQLSNNSFDFLGYFSIVLINPLTVRXQMLEYSCLIDNTATKKFDTIVPIIPLIGSLSKAKFCNVSGHPISKPIWTDLSDSDIIDRFVRICRNLSHYHSGSSKKQSLYRMKYILRLSCARTLARKHKTTVRAFFQRLGSGFLEEFFAEEQKFLSLVLPGIPLASGSDRVYKERIWYLDIIRINDLVNYS.

The protein belongs to the intron maturase 2 family. MatK subfamily.

The protein resides in the plastid. Its subcellular location is the chloroplast. In terms of biological role, usually encoded in the trnK tRNA gene intron. Probably assists in splicing its own and other chloroplast group II introns. This Alisma canaliculatum (Water plantain) protein is Maturase K.